The primary structure comprises 477 residues: Cysteine protease ATG4b (477 aa).

Positions 11–39 are disordered; sequence SKCSSSSTSEKRDISSPTSLVSDSASSDN. The segment covering 25–39 has biased composition (polar residues); that stretch reads SSPTSLVSDSASSDN. Cysteine 173 acts as the Nucleophile in catalysis. Residues aspartate 368 and histidine 370 contribute to the active site. The disordered stretch occupies residues 453-477; that stretch reads AETSSSTETSTEISGEEHEDDWQLL. A compositionally biased stretch (low complexity) spans 454–465; it reads ETSSSTETSTEI.

This sequence belongs to the peptidase C54 family. Interacts with ATG8a and ATG8d. As to expression, constitutively expressed.

It localises to the cytoplasm. The enzyme catalyses [protein]-C-terminal L-amino acid-glycyl-phosphatidylethanolamide + H2O = [protein]-C-terminal L-amino acid-glycine + a 1,2-diacyl-sn-glycero-3-phosphoethanolamine. Its function is as follows. Cysteine protease that plays a key role in autophagy by mediating both proteolytic activation and delipidation of ATG8 family proteins. The protease activity is required for proteolytic activation of ATG8 family proteins: cleaves the C-terminal amino acid of ATG8 proteins to reveal a C-terminal glycine. Exposure of the glycine at the C-terminus is essential for ATG8 proteins conjugation to phosphatidylethanolamine (PE) and insertion to membranes, which is necessary for autophagy. In addition to the protease activity, also mediates delipidation of PE-conjugated ATG8 proteins. This is Cysteine protease ATG4b from Arabidopsis thaliana (Mouse-ear cress).